Consider the following 1104-residue polypeptide: Transient receptor potential cation channel subfamily M member 8 (1104 aa).

The Cytoplasmic segment spans residues 1–733 (MSFEGARLSM…LWYYVAFFTS (733 aa)). The chain crosses the membrane as a helical span at residues 734–758 (PFVVFSWNVVFYIAFLLLFAYVLLM). Topologically, residues 759 to 765 (DFHSVPH) are extracellular. Residues 766–789 (TPELILYALVFVLFCDEVRQWYMN) form a helical membrane-spanning segment. Positions 782 and 785 each coordinate Ca(2+). Topologically, residues 790–796 (GVNYFTD) are cytoplasmic. A helical transmembrane segment spans residues 797–817 (LWNVMDTLGLFYFIAGIVFRL). Positions 799 and 802 each coordinate Ca(2+). Topologically, residues 818 to 822 (HSSNK) are extracellular. Residues 823-848 (SSLYSGRVIFCLDYIIFTLRLIHIFT) form a helical membrane-spanning segment. Residues 849–853 (VSRNL) are Cytoplasmic-facing. The chain crosses the membrane as a helical span at residues 854 to 890 (GPKIIMLQRMLIDVFFFLFLFAVWMVAFGVARQGILR). Residues 891–895 (QNEQR) lie on the Extracellular side of the membrane. The pore-forming intramembrane region spans 896-912 (WRWIFRSVIYEPYLAMF). At 913-953 (GQVPSDVDSTTYDFSHCTFSGNESKPLCVELDEYNLPRFPE) the chain is on the extracellular side. The chain crosses the membrane as a helical span at residues 954–984 (WITIPLVCIYMLSTNILLVNLLVAMFGYTVG). Residues 985–1104 (IVQENNDQVW…LLKEIANKIK (120 aa)) are Cytoplasmic-facing. Residues 1067 to 1104 (INTKANDNAEEMRHRFRQLDTKLNDLKGLLKEIANKIK) adopt a coiled-coil conformation.

The protein belongs to the transient receptor (TC 1.A.4) family. LTrpC subfamily. TRPM8 sub-subfamily. As to quaternary structure, homotetramer. Interacts (via N-terminus and C-terminus domains) with TCAF1; the interaction stimulates TRPM8 channel activity. Interacts (via N-terminus and C-terminus domains) with TCAF2; the interaction inhibits TRPM8 channel activity. Expressed in dorsal root and trigeminal ganglia. Specifically expressed in a subset of sensory neurons, including cold-sensitive neurons in trigeminal neurons.

Its subcellular location is the cell membrane. The protein localises to the membrane raft. The catalysed reaction is Ca(2+)(in) = Ca(2+)(out). The enzyme catalyses Na(+)(in) = Na(+)(out). It carries out the reaction K(+)(in) = K(+)(out). With respect to regulation, activated by cold temperatures and by both natural and synthetic cooling compounds such as menthol and icilin. Activation of the channel requires the presence of PI(4,5)P2; PI(4,5)P2 is necessary to gate the channel. Activated by intracellular Ca(2+). Non-selective ion channel permeable to monovalent and divalent cations, including Na(+), K(+), and Ca(2+), with higher permeability for Ca(2+). Activated by multiple factors, such as temperature, voltage, pressure, and changes in osmolality. Activated by cool temperatures (&lt;23-28 degrees Celsius) and by chemical ligands evoking a sensation of coolness, such as menthol and icilin, therefore plays a central role in the detection of environmental cold temperatures. TRPM8 is a voltage-dependent channel; its activation by cold or chemical ligands shifts its voltage thresholds towards physiological membrane potentials, leading to the opening of the channel. In addition to its critical role in temperature sensing, regulates basal tear secretion by sensing evaporation-induced cooling and changes in osmolality. The polypeptide is Transient receptor potential cation channel subfamily M member 8 (Trpm8) (Rattus norvegicus (Rat)).